The following is a 229-amino-acid chain: MIMSSQQEKKDYDEEQLRLMEEVCIVVDENDVPLRYGTKKECHLMENINKGLLHRAFSMFIFDEQNRLLLQQRAEEKITFPSLWTNTCCSHPLDVAGERGNTLPEAVEGVKNAAQRKLFHELGIQAKYIPKDKFQFLTRIHYLAPSTGAWGEHEIDYILFFKGKVELDINPNEVQAYKYVTMEELKEMFSDPQYGFTPWFKLICEHFMFKWWQDVDHASKFQDTLIHRC.

Residue lysine 39 participates in substrate binding. Histidine 43 and histidine 54 together coordinate Mg(2+). In terms of domain architecture, Nudix hydrolase spans 52-202; it reads LLHRAFSMFI…QYGFTPWFKL (151 aa). Glutamine 72 and lysine 77 together coordinate substrate. Cysteine 89 is a catalytic residue. Serine 90 provides a ligand contact to substrate. Residues glutamate 152 and glutamate 154 each contribute to the Mg(2+) site. Residue glutamate 154 is part of the active site.

This sequence belongs to the IPP isomerase type 1 family. The cofactor is Mg(2+).

It localises to the cytoplasm. The protein localises to the nucleus. It carries out the reaction isopentenyl diphosphate = dimethylallyl diphosphate. The protein operates within isoprenoid biosynthesis; dimethylallyl diphosphate biosynthesis; dimethylallyl diphosphate from isopentenyl diphosphate: step 1/1. Isopentenyl-diphosphate delta-isomerase; part of the second module of ergosterol biosynthesis pathway that includes the middle steps of the pathway. Idi1 catalyzes the 1,3-allylic rearrangement of isopentenyl (IPP) to its highly electrophilic allylic isomer, dimethylallyl diphosphate (DMAPP). The second module is carried out in the vacuole and involves the formation of farnesyl diphosphate, which is also an important intermediate in the biosynthesis of ubiquinone, dolichol, heme and prenylated proteins. Activity by the mevalonate kinase erg12 first converts mevalonate into 5-phosphomevalonate. 5-phosphomevalonate is then further converted to 5-diphosphomevalonate by the phosphomevalonate kinase erg8. The diphosphomevalonate decarboxylase mvd1 then produces isopentenyl diphosphate. The isopentenyl-diphosphate delta-isomerase idi1 then catalyzes the 1,3-allylic rearrangement of the homoallylic substrate isopentenyl (IPP) to its highly electrophilic allylic isomer, dimethylallyl diphosphate (DMAPP). Finally the farnesyl diphosphate synthase fps1 catalyzes the sequential condensation of isopentenyl pyrophosphate with dimethylallyl pyrophosphate, and then with the resultant geranylpyrophosphate to the ultimate product farnesyl pyrophosphate. The protein is Isopentenyl-diphosphate delta-isomerase of Schizosaccharomyces pombe (strain 972 / ATCC 24843) (Fission yeast).